The primary structure comprises 288 residues: 4-hydroxybenzoate octaprenyltransferase (288 aa).

7 helical membrane passes run 38 to 58 (IAAQ…GVFL), 98 to 120 (ILFA…MTIW), 141 to 161 (LLQV…FSAV), 163 to 183 (ESLP…SVIY), 213 to 233 (LIIG…GSLA), 238 to 258 (VYYI…KLMV), and 268 to 288 (AFLN…LSYL).

This sequence belongs to the UbiA prenyltransferase family. The cofactor is Mg(2+).

It is found in the cell inner membrane. It catalyses the reaction all-trans-octaprenyl diphosphate + 4-hydroxybenzoate = 4-hydroxy-3-(all-trans-octaprenyl)benzoate + diphosphate. Its pathway is cofactor biosynthesis; ubiquinone biosynthesis. Its function is as follows. Catalyzes the prenylation of para-hydroxybenzoate (PHB) with an all-trans polyprenyl group. Mediates the second step in the final reaction sequence of ubiquinone-8 (UQ-8) biosynthesis, which is the condensation of the polyisoprenoid side chain with PHB, generating the first membrane-bound Q intermediate 3-octaprenyl-4-hydroxybenzoate. The protein is 4-hydroxybenzoate octaprenyltransferase of Providencia stuartii.